The sequence spans 258 residues: Phosphate import ATP-binding protein PstB (258 aa).

Positions 5-247 (LDLKGVNIYY…EKIFSNPSQK (243 aa)) constitute an ABC transporter domain. An ATP-binding site is contributed by 37–44 (GPSGCGKT).

It belongs to the ABC transporter superfamily. Phosphate importer (TC 3.A.1.7) family. In terms of assembly, the complex is composed of two ATP-binding proteins (PstB), two transmembrane proteins (PstC and PstA) and a solute-binding protein (PstS).

It is found in the cell membrane. It carries out the reaction phosphate(out) + ATP + H2O = ADP + 2 phosphate(in) + H(+). Functionally, part of the ABC transporter complex PstSACB involved in phosphate import. Responsible for energy coupling to the transport system. The polypeptide is Phosphate import ATP-binding protein PstB (Mycolicibacterium paratuberculosis (strain ATCC BAA-968 / K-10) (Mycobacterium paratuberculosis)).